The primary structure comprises 57 residues: Large ribosomal subunit protein bL32 (57 aa).

The segment covering 1-22 has biased composition (basic residues); the sequence is MAVPKKKTSKAKRDQRRAHWRR. Residues 1-35 form a disordered region; it reads MAVPKKKTSKAKRDQRRAHWRRQASSQAQKALSLG.

It belongs to the bacterial ribosomal protein bL32 family.

The polypeptide is Large ribosomal subunit protein bL32 (rpmF) (Synechocystis sp. (strain ATCC 27184 / PCC 6803 / Kazusa)).